The chain runs to 228 residues: Ankyrin repeat domain-containing protein 46 (228 aa).

ANK repeat units lie at residues 11–40 (QTNV…DPNI), 44–73 (RGRT…DLLA), 77–103 (QGNT…KIDI), and 107–138 (QGAT…EVKG). Residues 195–215 (VLLLIFVIALLSLGIAYYVSG) form a helical membrane-spanning segment.

It is found in the membrane. This Bos taurus (Bovine) protein is Ankyrin repeat domain-containing protein 46 (ANKRD46).